A 736-amino-acid polypeptide reads, in one-letter code: Microtubule-associated protein mu-2 (736 aa).

Belongs to the orthoreovirus mu-2 protein family. Interacts with protein mu-NS; in viral inclusions. Interacts with polymerase lambda-3; this interaction stimulates the ATPase activity of mu-2. Requires a divalent metal cation as cofactor.

It is found in the virion. It localises to the host cytoplasm. Its subcellular location is the host cytoskeleton. Minor inner capsid (core) component. Displays NTPase and RNA 5'-triphosphatase (RTPase) activities. ATP is the preferred substrate for hydrolysis. May function as a cofactor of polymerase lambda-3. Associates with microtubules and plays a role in the formation, structural organization and morphology of viral inclusions, where the assembly of cores and the replication of viral RNA occur. Together with mu-NS, recruits the other core proteins to these inclusions. The polypeptide is Microtubule-associated protein mu-2 (M1) (Mammalia (T3D)).